The following is a 224-amino-acid chain: Large ribosomal subunit protein uL1 (224 aa).

This sequence belongs to the universal ribosomal protein uL1 family. In terms of assembly, part of the 50S ribosomal subunit.

In terms of biological role, binds directly to 23S rRNA. The L1 stalk is quite mobile in the ribosome, and is involved in E site tRNA release. Its function is as follows. Protein L1 is also a translational repressor protein, it controls the translation of the L11 operon by binding to its mRNA. The chain is Large ribosomal subunit protein uL1 from Borrelia hermsii (strain HS1 / DAH).